Consider the following 213-residue polypeptide: Pyrrolidone-carboxylate peptidase (213 aa).

Active-site residues include Glu78, Cys141, and His165.

The protein belongs to the peptidase C15 family. In terms of assembly, homotetramer.

It is found in the cytoplasm. The catalysed reaction is Release of an N-terminal pyroglutamyl group from a polypeptide, the second amino acid generally not being Pro.. Removes 5-oxoproline from various penultimate amino acid residues except L-proline. This chain is Pyrrolidone-carboxylate peptidase, found in Finegoldia magna (strain ATCC 29328 / DSM 20472 / WAL 2508) (Peptostreptococcus magnus).